The following is a 597-amino-acid chain: Spastin (597 aa).

The Cytoplasmic segment spans residues 1–20 (MPNNDILRPLAIPAKYVGSF). An intramembrane region (helical) is located at residues 21-37 (LVFLYNGLYFVFVVNLW). The Cytoplasmic portion of the chain corresponds to 38 to 597 (SRLFGKATKT…DWNRLYGSNA (560 aa)). The interval 56–80 (RKLGKDMASRAPPRRGQSSEDNEDG) is disordered. The MIT domain maps to 91–168 (HHKQAYAYIA…ENTRERMDEL (78 aa)). The segment at 193 to 289 (SARKTSSEPS…PAMMAKQSCV (97 aa)) is disordered. Residues 214–231 (SYKQSKSYKNSTTVTTKR) show a composition bias toward polar residues. A compositionally biased stretch (low complexity) spans 232–252 (SQASPSFSSSSSSVNSTAGSS).

It belongs to the AAA ATPase family. Spastin subfamily. As to quaternary structure, homohexamer. The homohexamer is stabilized by ATP-binding. The homohexamer may adopt a ring conformation through which microtubules pass prior to being severed. Interacts with microtubules.

The protein localises to the membrane. Its subcellular location is the cytoplasm. It is found in the cytoskeleton. The protein resides in the microtubule organizing center. It localises to the centrosome. The catalysed reaction is n ATP + n H2O + a microtubule = n ADP + n phosphate + (n+1) alpha/beta tubulin heterodimers.. Functionally, ATP-dependent microtubule severing protein. Microtubule severing may promote reorganization of cellular microtubule arrays and the release of microtubules from the microtubule organizing center following nucleation. The sequence is that of Spastin from Nematostella vectensis (Starlet sea anemone).